Consider the following 242-residue polypeptide: Venom redulysin 2 (242 aa).

The signal sequence occupies residues 1–19 (MSKIWILLLLVGAVQFARG). Positions 20–46 (FPALEEEQEDDVIDWPSFEYDLSDEER) are excised as a propeptide.

It belongs to the redulysin-like family. Contains 5 disulfide bonds. Expressed by the venom gland (posterior main gland) (at protein level).

It localises to the secreted. Its function is as follows. Highly abundant protein that may be responsible for the observed disruption of sensory neuron membranes, since it is homologous to proteins such as trialysin, which forms pores in lipid bilayers. Probable insecticidal toxin. The polypeptide is Venom redulysin 2 (Platymeris rhadamanthus (Red spot assassin bug)).